The sequence spans 91 residues: Putative regulatory protein Helmi_20580 (91 aa).

The protein belongs to the RemA family.

The sequence is that of Putative regulatory protein Helmi_20580 from Heliobacterium modesticaldum (strain ATCC 51547 / Ice1).